Reading from the N-terminus, the 190-residue chain is Threonylcarbamoyl-AMP synthase (190 aa).

Residues Thr-7–Gly-190 form the YrdC-like domain.

Belongs to the SUA5 family. TsaC subfamily.

Its subcellular location is the cytoplasm. It carries out the reaction L-threonine + hydrogencarbonate + ATP = L-threonylcarbamoyladenylate + diphosphate + H2O. Functionally, required for the formation of a threonylcarbamoyl group on adenosine at position 37 (t(6)A37) in tRNAs that read codons beginning with adenine. Catalyzes the conversion of L-threonine, HCO(3)(-)/CO(2) and ATP to give threonylcarbamoyl-AMP (TC-AMP) as the acyladenylate intermediate, with the release of diphosphate. The chain is Threonylcarbamoyl-AMP synthase from Salmonella typhi.